A 117-amino-acid polypeptide reads, in one-letter code: uncharacterized protein (117 aa).

Residues 1 to 12 (MAQNSVSLSAGD) show a composition bias toward polar residues. Disordered stretches follow at residues 1-30 (MAQN…NPSA) and 43-87 (VTRL…SPYP).

This is an uncharacterized protein from Mus musculus (Mouse).